We begin with the raw amino-acid sequence, 889 residues long: Cytoplasmic aconitate hydratase (889 aa).

Residues glutamine 86 and aspartate 205–histidine 207 each bind substrate. The [4Fe-4S] cluster site is built by cysteine 437, cysteine 503, and cysteine 506. Residues arginine 536, arginine 541, arginine 699, and serine 779–arginine 780 each bind substrate.

Belongs to the aconitase/IPM isomerase family. Interacts (when associated with the 4Fe-4S) with FBXL5. Interacts with frataxin(81-210). [4Fe-4S] cluster is required as a cofactor.

The protein localises to the cytoplasm. It localises to the cytosol. It catalyses the reaction citrate = D-threo-isocitrate. Functionally, bifunctional iron sensor that switches between 2 activities depending on iron availability. Iron deprivation, promotes its mRNA binding activity through which it regulates the expression of genes involved in iron uptake, sequestration and utilization. Binds to iron-responsive elements (IRES) in the untranslated region of target mRNAs preventing for instance the translation of ferritin and aminolevulinic acid synthase and stabilizing the transferrin receptor mRNA. Its function is as follows. Conversely, when cellular iron levels are high, binds a 4Fe-4S cluster which precludes RNA binding activity and promotes the aconitase activity, the isomerization of citrate to isocitrate via cis-aconitate. The chain is Cytoplasmic aconitate hydratase (Aco1) from Rattus norvegicus (Rat).